The chain runs to 564 residues: Pachytene checkpoint protein 2 (564 aa).

Residue 314–321 (GPPGTGKT) participates in ATP binding.

The protein belongs to the AAA ATPase family. PCH2 subfamily.

The protein localises to the nucleus. The protein resides in the nucleolus. It is found in the chromosome. Required for the pachytene checkpoint, the meiotic checkpoint that prevents chromosome segregation when defects in recombination and synaptonemal complex formation occurred. Represses meiotic recombination in the rDNA, probably by excluding the meiosis-specific protein HOP1 from the nucleolar region. The sequence is that of Pachytene checkpoint protein 2 (PCH2) from Saccharomyces cerevisiae (strain ATCC 204508 / S288c) (Baker's yeast).